A 273-amino-acid chain; its full sequence is WIMGHMVNSIAQIDEFVKLGANSTETDVSFDKQANPEYTYHGTPCDCGRDCLHWENFNDFPKGLRKATTPGDSKYREKLILVVFDLKTGSLYDNQAYDAGTKLAKNLLEHYWNNGNNGGRAYIVLSIPNLNHYKLIEGFKETLKKEGHEDLLEKVGHDFSGNDDIPDVEKAYKKAGVTGHVWQSDGITNCLLRGLSRVKLAVANRDSGNEFINKVYYWTVDKRSTTRDSLDAGVDGIMTNYPDVIADVLNEAAYKKKFRVATYDDNPWETFKP.

H5 is a catalytic residue. Mg(2+) is bound by residues E25 and D27. The active-site Nucleophile is H41. Disulfide bonds link C45–C51 and C47–C190. D85 lines the Mg(2+) pocket.

It belongs to the arthropod phospholipase D family. Class II subfamily. Mg(2+) is required as a cofactor. Expressed by the venom gland.

It localises to the secreted. It catalyses the reaction an N-(acyl)-sphingosylphosphocholine = an N-(acyl)-sphingosyl-1,3-cyclic phosphate + choline. The enzyme catalyses an N-(acyl)-sphingosylphosphoethanolamine = an N-(acyl)-sphingosyl-1,3-cyclic phosphate + ethanolamine. The catalysed reaction is a 1-acyl-sn-glycero-3-phosphocholine = a 1-acyl-sn-glycero-2,3-cyclic phosphate + choline. It carries out the reaction a 1-acyl-sn-glycero-3-phosphoethanolamine = a 1-acyl-sn-glycero-2,3-cyclic phosphate + ethanolamine. Its function is as follows. Dermonecrotic toxins cleave the phosphodiester linkage between the phosphate and headgroup of certain phospholipids (sphingolipid and lysolipid substrates), forming an alcohol (often choline) and a cyclic phosphate. This toxin acts on sphingomyelin (SM). It may also act on ceramide phosphoethanolamine (CPE), lysophosphatidylcholine (LPC) and lysophosphatidylethanolamine (LPE), but not on lysophosphatidylserine (LPS), and lysophosphatidylglycerol (LPG). It acts by transphosphatidylation, releasing exclusively cyclic phosphate products as second products. Induces dermonecrosis, hemolysis, increased vascular permeability, edema, inflammatory response, and platelet aggregation. In Loxosceles rufescens (Mediterranean recluse spider), this protein is Dermonecrotic toxin LruSicTox-alphaIC1a.